The sequence spans 82 residues: Delta-actitoxin-Aeq2c (82 aa).

Positions 1-19 (MNRLMILVFAAVFLALASA) are cleaved as a signal peptide. Positions 20–26 (DEDVDIA) are excised as a propeptide. Cystine bridges form between C32/C79, C34/C69, and C62/C80.

It belongs to the sea anemone sodium channel inhibitory toxin family. Type I subfamily.

It localises to the secreted. Its subcellular location is the nematocyst. Binds specifically to voltage-gated sodium channels (Nav), thereby delaying their inactivation during signal transduction. Causes death to crabs. This Actinia equina (Beadlet anemone) protein is Delta-actitoxin-Aeq2c.